Consider the following 190-residue polypeptide: Elongation factor P-like protein (190 aa).

Belongs to the elongation factor P family.

The sequence is that of Elongation factor P-like protein from Citrobacter koseri (strain ATCC BAA-895 / CDC 4225-83 / SGSC4696).